The following is a 497-amino-acid chain: O-acetyltransferase PaAT-1 (497 aa).

A glycan (N-linked (GlcNAc...) asparagine) is linked at N35. Transmembrane regions (helical) follow at residues 69–89, 107–127, 157–177, 241–261, 278–298, 329–349, 375–395, 406–426, and 443–463; these read GISA…GWHI, LLIS…YSLS, LFVP…LNWY, LWTL…LMAF, VLFQ…GMLI, AIGV…HLAF, PIAA…QVLF, ISFA…HALG, and VAIS…ADFV.

Belongs to the acyltransferase 3 family.

Its subcellular location is the membrane. It participates in mycotoxin biosynthesis. In terms of biological role, O-acetyltransferase; part of the 2 gene clusters that mediate the biosynthesis of fusicoccins, diterpene glucosides that display phytohormone-like activity and function as potent activators of plasma membrane H(+)-ATPases in plants by modifying 14-3-3 proteins and cause the plant disease constriction canker. The first step in the pathway is performed by the fusicoccadiene synthase PaFS that possesses both prenyl transferase and terpene cyclase activity, converting isopentenyl diphosphate and dimethylallyl diphosphate into geranylgeranyl diphosphate (GGDP) and successively converting GGDP into fusicocca-2,10(14)-diene, a precursor for fusicoccin H. The second step is the oxidation at the C-8 position by the cytochrome P450 monooxygenase PaP450-2 to yield fusicocca-2,10(14)-diene-8-beta-ol. The cytochrome P450 monooxygenase PaP450-1 then catalyzes the hydroxylation at the C-16 position to produce fusicocca-2,10(14)-diene-8-beta,16-diol. The dioxygenase fc-dox then catalyzes the 16-oxydation of fusicocca-2,10(14)-diene-8-beta,16-diol to yield an aldehyde (8-beta-hydroxyfusicocca-1,10(14)-dien-16-al). The short-chain dehydrogenase/reductase fc-sdr catalyzes the reduction of the aldehyde to yield fusicocca-1,10(14)-diene-8-beta,16-diol. The next step is the hydroxylation at C-9 performed by the cytochrome P450 monooxygenase PaP450-3 that leads to fusicoccin H aglycon which is glycosylated to fusicoccin H by the O-glycosyltransferase PaGT. Hydroxylation at C-12 by the cytochrome P450 monooxygenase PaP450-4 leads then to the production of fusicoccin Q and is followed by methylation by the O-methyltransferase PaMT to yield fusicoccin P. Fusicoccin P is further converted to fusicoccin J via prenylation by the O-glucose prenyltransferase PaPT. Cytochrome P450 monooxygenase PaP450-5 then performs hydroxylation at C-19 to yield dideacetyl-fusicoccin A which is acetylated to 3'-O-deacetyl-fusicoccin A by the O-acetyltransferase PaAT-2. Finally, a another acetylation by the O-acetyltransferase PaAT-1 yields fusicoccin A. The sequence is that of O-acetyltransferase PaAT-1 from Phomopsis amygdali (Fusicoccum amygdali).